A 596-amino-acid polypeptide reads, in one-letter code: Probable lysosomal cobalamin transporter (596 aa).

The next 10 membrane-spanning stretches (helical) occupy residues 7–27 (AFIW…AAIF), 46–66 (IITL…IALV), 95–115 (IVYY…IPFT), 145–165 (TLFF…APVA), 196–216 (LLIS…LALL), 313–333 (LVGG…MLIT), 350–370 (ILGS…SSIV), 376–396 (VLMA…IAVI), 420–440 (MATV…AMII), and 507–527 (FFGA…LIVF). A disordered region spans residues 566–596 (WQDIRGKAKNQTPSRGAAGRGIRGDDDHDDD). Positions 587 to 596 (IRGDDDHDDD) are enriched in basic and acidic residues.

This sequence belongs to the LIMR family. LMBRD1 subfamily.

The protein localises to the lysosome membrane. Functionally, probable lysosomal cobalamin transporter. Required to export cobalamin from lysosomes allowing its conversion to cofactors. The chain is Probable lysosomal cobalamin transporter from Sclerotinia sclerotiorum (strain ATCC 18683 / 1980 / Ss-1) (White mold).